Consider the following 133-residue polypeptide: Ribosome-binding factor A (133 aa).

The protein belongs to the RbfA family. Monomer. Binds 30S ribosomal subunits, but not 50S ribosomal subunits or 70S ribosomes.

It is found in the cytoplasm. In terms of biological role, one of several proteins that assist in the late maturation steps of the functional core of the 30S ribosomal subunit. Associates with free 30S ribosomal subunits (but not with 30S subunits that are part of 70S ribosomes or polysomes). Required for efficient processing of 16S rRNA. May interact with the 5'-terminal helix region of 16S rRNA. The protein is Ribosome-binding factor A of Bordetella pertussis (strain Tohama I / ATCC BAA-589 / NCTC 13251).